A 149-amino-acid polypeptide reads, in one-letter code: uncharacterized protein (149 aa).

The 113-residue stretch at 16–128 folds into the HotDog ACOT-type domain; the sequence is PAGEPAIRVI…LFTFVAIDED (113 aa).

This sequence belongs to the acyl coenzyme A hydrolase family.

This is an uncharacterized protein from Zymomonas mobilis subsp. mobilis (strain ATCC 31821 / ZM4 / CP4).